A 416-amino-acid polypeptide reads, in one-letter code: uncharacterized protein (416 aa).

The N-acetyltransferase domain maps to 3 to 150; that stretch reads LDVRTITPSE…SVYRAGLDAR (148 aa). Acetyl-CoA-binding positions include 83–85 and 91–96; these read VTV and RRGLLS. The Proton donor role is filled by Tyr124. Phe416 serves as the catalytic Proton acceptor; via carboxylate.

It belongs to the acetyltransferase Eis family. In terms of assembly, homohexamer; trimer of dimers.

This is an uncharacterized protein from Streptomyces griseus subsp. griseus (strain JCM 4626 / CBS 651.72 / NBRC 13350 / KCC S-0626 / ISP 5235).